The sequence spans 428 residues: Serine--tRNA ligase (428 aa).

231–233 (TAE) contributes to the L-serine binding site. 262–264 (RSE) contributes to the ATP binding site. Residue E285 participates in L-serine binding. Residue 349–352 (EISS) participates in ATP binding. Residue S385 participates in L-serine binding.

It belongs to the class-II aminoacyl-tRNA synthetase family. Type-1 seryl-tRNA synthetase subfamily. Homodimer. The tRNA molecule binds across the dimer.

The protein resides in the cytoplasm. It carries out the reaction tRNA(Ser) + L-serine + ATP = L-seryl-tRNA(Ser) + AMP + diphosphate + H(+). The enzyme catalyses tRNA(Sec) + L-serine + ATP = L-seryl-tRNA(Sec) + AMP + diphosphate + H(+). It participates in aminoacyl-tRNA biosynthesis; selenocysteinyl-tRNA(Sec) biosynthesis; L-seryl-tRNA(Sec) from L-serine and tRNA(Sec): step 1/1. Its function is as follows. Catalyzes the attachment of serine to tRNA(Ser). Is also able to aminoacylate tRNA(Sec) with serine, to form the misacylated tRNA L-seryl-tRNA(Sec), which will be further converted into selenocysteinyl-tRNA(Sec). The polypeptide is Serine--tRNA ligase (Staphylococcus aureus (strain Mu3 / ATCC 700698)).